We begin with the raw amino-acid sequence, 182 residues long: Small ribosomal subunit protein uS4c (182 aa).

The disordered stretch occupies residues 13–32 (GLTSKRPRSGSDLKNPLRSG). The S4 RNA-binding domain maps to 82-143 (MRLDNILFRL…KQRSKALIQN (62 aa)).

Belongs to the universal ribosomal protein uS4 family. As to quaternary structure, part of the 30S ribosomal subunit. Contacts protein S5. The interaction surface between S4 and S5 is involved in control of translational fidelity.

It localises to the plastid. Its subcellular location is the chloroplast. In terms of biological role, one of the primary rRNA binding proteins, it binds directly to 16S rRNA where it nucleates assembly of the body of the 30S subunit. With S5 and S12 plays an important role in translational accuracy. The sequence is that of Small ribosomal subunit protein uS4c (rps4) from Scadoxus puniceus (Paintbrush lily).